A 37-amino-acid chain; its full sequence is Turripeptide Lol6.2 (37 aa).

3 cysteine pairs are disulfide-bonded: Cys-4–Cys-16, Cys-8–Cys-21, and Cys-15–Cys-29.

As to expression, expressed by the venom duct.

It localises to the secreted. Functionally, acts as a neurotoxin by inhibiting an ion channel. The sequence is that of Turripeptide Lol6.2 from Iotyrris olangoensis (Sea snail).